The following is a 91-amino-acid chain: DNA/RNA-binding protein Alba (91 aa).

This sequence belongs to the histone-like Alba family.

The protein resides in the cytoplasm. It localises to the chromosome. Binds double-stranded DNA tightly but without sequence specificity. Involved in DNA compaction. This Methanoculleus marisnigri (strain ATCC 35101 / DSM 1498 / JR1) protein is DNA/RNA-binding protein Alba.